The primary structure comprises 197 residues: Holliday junction branch migration complex subunit RuvA (197 aa).

Residues 1-64 (MIARLAGKVA…QDAIELYGFA (64 aa)) form a domain I region. The domain II stretch occupies residues 65-141 (SEDEEAVFRA…LALLARAAGP (77 aa)). The flexible linker stretch occupies residues 141 to 145 (PARAK). The tract at residues 146 to 197 (PGAGVVEQLRQALVNLGYKPPQADAAADALRDEAEGKKLDELLREALKRLRG) is domain III.

It belongs to the RuvA family. Homotetramer. Forms an RuvA(8)-RuvB(12)-Holliday junction (HJ) complex. HJ DNA is sandwiched between 2 RuvA tetramers; dsDNA enters through RuvA and exits via RuvB. An RuvB hexamer assembles on each DNA strand where it exits the tetramer. Each RuvB hexamer is contacted by two RuvA subunits (via domain III) on 2 adjacent RuvB subunits; this complex drives branch migration. In the full resolvosome a probable DNA-RuvA(4)-RuvB(12)-RuvC(2) complex forms which resolves the HJ.

It localises to the cytoplasm. The RuvA-RuvB-RuvC complex processes Holliday junction (HJ) DNA during genetic recombination and DNA repair, while the RuvA-RuvB complex plays an important role in the rescue of blocked DNA replication forks via replication fork reversal (RFR). RuvA specifically binds to HJ cruciform DNA, conferring on it an open structure. The RuvB hexamer acts as an ATP-dependent pump, pulling dsDNA into and through the RuvAB complex. HJ branch migration allows RuvC to scan DNA until it finds its consensus sequence, where it cleaves and resolves the cruciform DNA. This Anaeromyxobacter sp. (strain Fw109-5) protein is Holliday junction branch migration complex subunit RuvA.